A 392-amino-acid polypeptide reads, in one-letter code: MSMPTIRAVRALTVRGGGADYHDQDAGHWIDDHIATPMSRYPEYRQSRQSFGINVLGTLVIEIEASDGTVGFAVTTGGEIGAFIVERHLARFIEGQRVTDIEKMWDQMFYATLYYGRKGVVLNAISGVDLALWDLLGKVRQEPVHQLLGGKVRDELEFYATGARPDLAKEMGFIGGKLPLHHGPAEGDAGLRRNLDALADMRSRVGDDFWLMLDCWMSLDVPYATRLAHGAHALGLKWIEECLPPDDYWGYAKLRRDVPRGMLVTTGEHEATRWGFRMLLEMECCDIIQPDVGWCGGLTELMRISALADARGVLVIPHGSSVYSYHFVATRHNSPFAEFLMMAPQADRVVPMFDPLLLDEPVPVGGRMKVPDTAGFGVRLNPDVRMQRPYEH.

Positions 22 and 48 each coordinate substrate. Asp-214, Glu-240, and Glu-268 together coordinate Mg(2+). Residue His-318 is the Proton acceptor of the active site. Glu-338 serves as a coordination point for substrate.

The protein belongs to the mandelate racemase/muconate lactonizing enzyme family. RhamD subfamily. As to quaternary structure, homooctamer; tetramer of dimers. Mg(2+) serves as cofactor.

The catalysed reaction is L-rhamnonate = 2-dehydro-3-deoxy-L-rhamnonate + H2O. Functionally, catalyzes the dehydration of L-rhamnonate to 2-keto-3-deoxy-L-rhamnonate (KDR). The protein is L-rhamnonate dehydratase of Burkholderia ambifaria (strain ATCC BAA-244 / DSM 16087 / CCUG 44356 / LMG 19182 / AMMD) (Burkholderia cepacia (strain AMMD)).